The sequence spans 101 residues: Integration host factor subunit beta (101 aa).

The interval 62-84 (RNPKTGESVALPGKHVPHFKPGK) is disordered.

This sequence belongs to the bacterial histone-like protein family. In terms of assembly, heterodimer of an alpha and a beta chain.

Its function is as follows. This protein is one of the two subunits of integration host factor, a specific DNA-binding protein that functions in genetic recombination as well as in transcriptional and translational control. The chain is Integration host factor subunit beta from Stenotrophomonas maltophilia (strain K279a).